The sequence spans 61 residues: MTIAERLRQEGHQIGWQEGKLEGLHEQAIKIALRMLEQGFDRDQVLAATQLSEADLAANNH.

This is an uncharacterized protein from Escherichia coli (strain K12).